Consider the following 495-residue polypeptide: Aspartyl/glutamyl-tRNA(Asn/Gln) amidotransferase subunit B (495 aa).

This sequence belongs to the GatB/GatE family. GatB subfamily. As to quaternary structure, heterotrimer of A, B and C subunits.

The catalysed reaction is L-glutamyl-tRNA(Gln) + L-glutamine + ATP + H2O = L-glutaminyl-tRNA(Gln) + L-glutamate + ADP + phosphate + H(+). The enzyme catalyses L-aspartyl-tRNA(Asn) + L-glutamine + ATP + H2O = L-asparaginyl-tRNA(Asn) + L-glutamate + ADP + phosphate + 2 H(+). Functionally, allows the formation of correctly charged Asn-tRNA(Asn) or Gln-tRNA(Gln) through the transamidation of misacylated Asp-tRNA(Asn) or Glu-tRNA(Gln) in organisms which lack either or both of asparaginyl-tRNA or glutaminyl-tRNA synthetases. The reaction takes place in the presence of glutamine and ATP through an activated phospho-Asp-tRNA(Asn) or phospho-Glu-tRNA(Gln). In Prochlorococcus marinus (strain MIT 9313), this protein is Aspartyl/glutamyl-tRNA(Asn/Gln) amidotransferase subunit B.